The primary structure comprises 108 residues: Replication restart protein PriB (108 aa).

The SSB domain maps to 11–108 (INRNQVIISG…VLHVRDTRII (98 aa)).

The protein belongs to the PriB family. Homodimer. Interacts with PriA and DnaT. Component of the replication restart primosome. Primosome assembly occurs via a 'hand-off' mechanism. PriA binds to replication forks, subsequently PriB then DnaT bind; DnaT then displaces ssDNA to generate the helicase loading substrate.

In terms of biological role, involved in the restart of stalled replication forks, which reloads the replicative helicase on sites other than the origin of replication; the PriA-PriB pathway is the major replication restart pathway. During primosome assembly it facilitates complex formation between PriA and DnaT on DNA; stabilizes PriA on DNA. Stimulates the DNA unwinding activity of PriA helicase. The protein is Replication restart protein PriB of Nitrosomonas europaea (strain ATCC 19718 / CIP 103999 / KCTC 2705 / NBRC 14298).